The primary structure comprises 770 residues: Shutoff protein (770 aa).

Disordered regions lie at residues 1-20 (MEEDLKLQPDSETLTTPNSE) and 30-49 (EEENEQVEQDPGYVTPPEDG). A compositionally biased stretch (polar residues) spans 10–19 (DSETLTTPNS). The binding to host EIF4G stretch occupies residues 248-312 (VMDQVLIKRA…AVLVTVELEC (65 aa)). One can recognise an RRM domain in the interval 315–433 (RFFANPQTLR…ELWTSFDERT (119 aa)). Tyrosine 332 and tyrosine 647 each carry phosphotyrosine; by host. The disordered stretch occupies residues 661 to 770 (LSAAASCRSQ…TATMFTESQP (110 aa)). The segment covering 726–739 (GGPRGRGGRNHRQR) has biased composition (basic residues). Residues 742–755 (TIFQKTRSEPTSEN) are compositionally biased toward polar residues.

The protein belongs to the adenoviridae shutoff protein family. In terms of assembly, monomer. Interacts with hexon protein; this interaction allows chaperoning and trimerization of hexon proteins. Interacts (via N-terminus) with host initiation factor EIF4G (via C-terminus). Interacts (via RRM domain) with viral mRNAs that contain the tripartite leader; this interaction allows ribosome shunting and expression of viral late mRNAs. Post-translationally, might be cleaved by the viral protease. In terms of processing, phosphorylated. Tyrosine phosphorylation enhances preferential binding to tripartite leader mRNAs and allows ribosome shunting. Methylated. Asymmetric dimethylation by host PRMT1 of the Arg/Gly-rich region may regulate shutoff protein binding to hexon and promote the capsid assembly in the nucleus.

It localises to the host cytoplasm. Its function is as follows. Protein that inhibits host translation while promoting late viral translation by ribosome shunting. Blocks host cap-dependent translation by binding to eIF4G, displacing MKNK1 from cap initiation complexes and preventing EIF4E phosphorylation. Binds to the tripartite leader sequence of viral late mRNAs and recruits host eIF4G, PABPC1/poly-A binding protein and 40S ribosomes subunits on viral mRNAs, allowing ribosome shunting and efficient translation of late viral mRNAs even though conventional translation via ribosome scanning from the cap has been shut off in the host cell. During assembly, acts as a chaperone protein that helps hexon proteins assembly into trimers. This Human adenovirus F serotype 40 (HAdV-40) protein is Shutoff protein.